The chain runs to 55 residues: Spermatid nuclear transition protein 1 (55 aa).

Positions 1–42 (MSTSRKLKSHGMRRSKSRSPHKGVKRGGSKRKYRKGNLKSRK) are enriched in basic residues. Positions 1–55 (MSTSRKLKSHGMRRSKSRSPHKGVKRGGSKRKYRKGNLKSRKRGDDANRNYRSHL) are disordered. A phosphoserine mark is found at serine 9 and serine 40.

The protein belongs to the nuclear transition protein 1 family. Expressed by spermatids (at protein level).

The protein localises to the nucleus. It localises to the chromosome. Functionally, plays a key role in the replacement of histones to protamine in the elongating spermatids of mammals. In condensing spermatids, loaded onto the nucleosomes, where it promotes the recruitment and processing of protamines, which are responsible for histone eviction. This is Spermatid nuclear transition protein 1 (TNP1) from Homo sapiens (Human).